We begin with the raw amino-acid sequence, 299 residues long: 33 kDa chaperonin (299 aa).

Intrachain disulfides connect Cys234-Cys236 and Cys268-Cys271.

Belongs to the HSP33 family. In terms of processing, under oxidizing conditions two disulfide bonds are formed involving the reactive cysteines. Under reducing conditions zinc is bound to the reactive cysteines and the protein is inactive.

The protein resides in the cytoplasm. In terms of biological role, redox regulated molecular chaperone. Protects both thermally unfolding and oxidatively damaged proteins from irreversible aggregation. Plays an important role in the bacterial defense system toward oxidative stress. This Pseudomonas putida (strain GB-1) protein is 33 kDa chaperonin.